The following is a 322-amino-acid chain: Lipoyl synthase (322 aa).

Positions 69, 74, 80, 95, 99, 102, and 309 each coordinate [4Fe-4S] cluster. In terms of domain architecture, Radical SAM core spans 81–298 (FNHGTATFMI…GVKAKALGFD (218 aa)).

The protein belongs to the radical SAM superfamily. Lipoyl synthase family. The cofactor is [4Fe-4S] cluster.

The protein localises to the cytoplasm. It catalyses the reaction [[Fe-S] cluster scaffold protein carrying a second [4Fe-4S](2+) cluster] + N(6)-octanoyl-L-lysyl-[protein] + 2 oxidized [2Fe-2S]-[ferredoxin] + 2 S-adenosyl-L-methionine + 4 H(+) = [[Fe-S] cluster scaffold protein] + N(6)-[(R)-dihydrolipoyl]-L-lysyl-[protein] + 4 Fe(3+) + 2 hydrogen sulfide + 2 5'-deoxyadenosine + 2 L-methionine + 2 reduced [2Fe-2S]-[ferredoxin]. Its pathway is protein modification; protein lipoylation via endogenous pathway; protein N(6)-(lipoyl)lysine from octanoyl-[acyl-carrier-protein]: step 2/2. Its function is as follows. Catalyzes the radical-mediated insertion of two sulfur atoms into the C-6 and C-8 positions of the octanoyl moiety bound to the lipoyl domains of lipoate-dependent enzymes, thereby converting the octanoylated domains into lipoylated derivatives. The sequence is that of Lipoyl synthase from Psychromonas ingrahamii (strain DSM 17664 / CCUG 51855 / 37).